We begin with the raw amino-acid sequence, 169 residues long: Cell division inhibitor SulA (169 aa).

The segment at 106 to 112 (ALRTGNY) is ftsZ binding. Positions 162 to 169 (KIHSNLYH) are lon protease binding.

Belongs to the SulA family. Interacts with FtsZ. Post-translationally, is rapidly cleaved and degraded by the Lon protease once DNA damage is repaired.

Its function is as follows. Component of the SOS system and an inhibitor of cell division. Accumulation of SulA causes rapid cessation of cell division and the appearance of long, non-septate filaments. In the presence of GTP, binds a polymerization-competent form of FtsZ in a 1:1 ratio, thus inhibiting FtsZ polymerization and therefore preventing it from participating in the assembly of the Z ring. This mechanism prevents the premature segregation of damaged DNA to daughter cells during cell division. The polypeptide is Cell division inhibitor SulA (Shigella flexneri serotype 5b (strain 8401)).